The following is a 368-amino-acid chain: Glutamate 5-kinase (368 aa).

ATP is bound at residue K18. Residues S58, D145, and N157 each contribute to the substrate site. ATP contacts are provided by residues 177–178 (SD) and 218–224 (TGGMASK). In terms of domain architecture, PUA spans 280 to 358 (AGSLTLDEGA…SELPGELRRP (79 aa)).

Belongs to the glutamate 5-kinase family.

It localises to the cytoplasm. The enzyme catalyses L-glutamate + ATP = L-glutamyl 5-phosphate + ADP. The protein operates within amino-acid biosynthesis; L-proline biosynthesis; L-glutamate 5-semialdehyde from L-glutamate: step 1/2. Its function is as follows. Catalyzes the transfer of a phosphate group to glutamate to form L-glutamate 5-phosphate. The protein is Glutamate 5-kinase of Mycobacterium ulcerans (strain Agy99).